We begin with the raw amino-acid sequence, 425 residues long: Adenylosuccinate synthetase (425 aa).

GTP-binding positions include 12 to 18 and 40 to 42; these read GDEGKGK and GHT. Catalysis depends on Asp13, which acts as the Proton acceptor. Mg(2+) is bound by residues Asp13 and Gly40. Residues 13–16, 38–41, Thr126, Arg140, Gln221, Thr236, and Arg300 contribute to the IMP site; these read DEGK and NAGH. The active-site Proton donor is His41. A substrate-binding site is contributed by 296–302; that stretch reads ATTGRPR. Residues Arg302, 328-330, and 410-412 each bind GTP; these read KLD and STG.

The protein belongs to the adenylosuccinate synthetase family. In terms of assembly, homodimer. Mg(2+) is required as a cofactor.

It localises to the cytoplasm. The enzyme catalyses IMP + L-aspartate + GTP = N(6)-(1,2-dicarboxyethyl)-AMP + GDP + phosphate + 2 H(+). Its pathway is purine metabolism; AMP biosynthesis via de novo pathway; AMP from IMP: step 1/2. Functionally, plays an important role in the de novo pathway of purine nucleotide biosynthesis. Catalyzes the first committed step in the biosynthesis of AMP from IMP. This chain is Adenylosuccinate synthetase, found in Thermodesulfovibrio yellowstonii (strain ATCC 51303 / DSM 11347 / YP87).